Here is a 727-residue protein sequence, read N- to C-terminus: FACT complex subunit Ssrp1 (727 aa).

2 disordered regions span residues 458–565 and 596–727; these read AEAR…AFML and ELKD…EGSD. 2 stretches are compositionally biased toward acidic residues: residues 464–479 and 487–508; these read EEED…ESTD and NESD…DDSD. The segment covering 510-519 has biased composition (gly residues); that stretch reads SGGGGDGGTD. 3 stretches are compositionally biased toward basic and acidic residues: residues 529–555, 596–620, and 675–703; these read KKNE…DTGK, ELKD…EMRN, and DQEK…KSES. The segment at residues 556 to 622 is a DNA-binding region (HMG box); sequence PKRGTSAFML…RYQEEMRNYK (67 aa). Residues 704 to 727 are compositionally biased toward acidic residues; it reads EGGDSDDASNASEDDDEEEDEGSD.

Belongs to the SSRP1 family. As to quaternary structure, component of the FACT complex, a stable heterodimer of dre4/spt16 and Ssrp.

It localises to the nucleus. The protein localises to the chromosome. It is found in the nucleolus. Functionally, component of the FACT complex, a general chromatin factor that acts to reorganize nucleosomes. The FACT complex is involved in multiple processes that require DNA as a template such as mRNA elongation, DNA replication and DNA repair. During transcription elongation the FACT complex acts as a histone chaperone that both destabilizes and restores nucleosomal structure. It facilitates the passage of RNA polymerase II and transcription by promoting the dissociation of one histone H2A-H2B dimer from the nucleosome, then subsequently promotes the reestablishment of the nucleosome following the passage of RNA polymerase II. Binds specifically to single-stranded DNA and RNA with highest affinity for nucleotides G and U. The FACT complex is required for expression of Hox genes. The chain is FACT complex subunit Ssrp1 (Ssrp) from Drosophila pseudoobscura pseudoobscura (Fruit fly).